The chain runs to 190 residues: Peptide methionine sulfoxide reductase A2-2 (190 aa).

The tract at residues 1 to 20 (MSNDTGADGGAANPDLGPDA) is disordered. Residues 10–20 (GAANPDLGPDA) show a composition bias toward low complexity.

The protein belongs to the MsrA Met sulfoxide reductase family.

The protein localises to the cytoplasm. Its subcellular location is the cytosol. It carries out the reaction L-methionyl-[protein] + [thioredoxin]-disulfide + H2O = L-methionyl-(S)-S-oxide-[protein] + [thioredoxin]-dithiol. It catalyses the reaction [thioredoxin]-disulfide + L-methionine + H2O = L-methionine (S)-S-oxide + [thioredoxin]-dithiol. Its function is as follows. Catalyzes the reduction of methionine sulfoxide (MetSO) to methionine in proteins. Plays a protective role against oxidative stress by restoring activity to proteins that have been inactivated by methionine oxidation. MSRA family specifically reduces the MetSO S-enantiomer. This Oryza sativa subsp. japonica (Rice) protein is Peptide methionine sulfoxide reductase A2-2 (MSRA2-2).